The chain runs to 265 residues: Small ribosomal subunit protein uS2 (265 aa).

Residues 226–265 (AAAPNSASVREEEFSAESADEGKGRRAPAKKGDKKADAAE) form a disordered region. Over residues 245-265 (DEGKGRRAPAKKGDKKADAAE) the composition is skewed to basic and acidic residues.

Belongs to the universal ribosomal protein uS2 family.

This chain is Small ribosomal subunit protein uS2, found in Xanthomonas euvesicatoria pv. vesicatoria (strain 85-10) (Xanthomonas campestris pv. vesicatoria).